Here is a 243-residue protein sequence, read N- to C-terminus: UDP-2,3-diacylglucosamine hydrolase (243 aa).

Residues D9, H11, D42, N79, and H114 each coordinate Mn(2+). 79 to 80 serves as a coordination point for substrate; that stretch reads NR. Substrate contacts are provided by D122, S160, N164, and H195. H195 and H197 together coordinate Mn(2+).

It belongs to the LpxH family. Requires Mn(2+) as cofactor.

It is found in the cell inner membrane. It catalyses the reaction UDP-2-N,3-O-bis[(3R)-3-hydroxytetradecanoyl]-alpha-D-glucosamine + H2O = 2-N,3-O-bis[(3R)-3-hydroxytetradecanoyl]-alpha-D-glucosaminyl 1-phosphate + UMP + 2 H(+). It functions in the pathway glycolipid biosynthesis; lipid IV(A) biosynthesis; lipid IV(A) from (3R)-3-hydroxytetradecanoyl-[acyl-carrier-protein] and UDP-N-acetyl-alpha-D-glucosamine: step 4/6. In terms of biological role, hydrolyzes the pyrophosphate bond of UDP-2,3-diacylglucosamine to yield 2,3-diacylglucosamine 1-phosphate (lipid X) and UMP by catalyzing the attack of water at the alpha-P atom. Involved in the biosynthesis of lipid A, a phosphorylated glycolipid that anchors the lipopolysaccharide to the outer membrane of the cell. The sequence is that of UDP-2,3-diacylglucosamine hydrolase from Coxiella burnetii (strain Dugway 5J108-111).